Consider the following 529-residue polypeptide: Polygalacturonase (529 aa).

A signal peptide spans 1–21 (MNHRYTLLALAAAALSAGAHA). D305 serves as the catalytic Proton donor. H331 is a catalytic residue. The interval 516–529 (AFVPLKSVAPTSPI) is required for PGA export across the outer membrane and catalytic activity.

Belongs to the glycosyl hydrolase 28 family. In terms of assembly, monomer.

It localises to the secreted. The catalysed reaction is (1,4-alpha-D-galacturonosyl)n+m + H2O = (1,4-alpha-D-galacturonosyl)n + (1,4-alpha-D-galacturonosyl)m.. Its function is as follows. Contributes to the wilt disease production on tomato. The polypeptide is Polygalacturonase (pglA) (Ralstonia solanacearum (Pseudomonas solanacearum)).